Here is a 409-residue protein sequence, read N- to C-terminus: Na(+)-translocating NADH-quinone reductase subunit F (409 aa).

Residues 5–25 (FIFGIGAFTAIVLVLAVVILI) traverse the membrane as a helical segment. Positions 34–128 (GDITISINND…SMDVELPEEV (95 aa)) constitute a 2Fe-2S ferredoxin-type domain. 4 residues coordinate [2Fe-2S] cluster: cysteine 71, cysteine 77, cysteine 80, and cysteine 112. The FAD-binding FR-type domain maps to 131-271 (VKKWECTVIS…SGPFGEFFAK (141 aa)).

This sequence belongs to the NqrF family. Composed of six subunits; NqrA, NqrB, NqrC, NqrD, NqrE and NqrF. Requires [2Fe-2S] cluster as cofactor. It depends on FAD as a cofactor.

It is found in the cell inner membrane. The catalysed reaction is a ubiquinone + n Na(+)(in) + NADH + H(+) = a ubiquinol + n Na(+)(out) + NAD(+). Functionally, NQR complex catalyzes the reduction of ubiquinone-1 to ubiquinol by two successive reactions, coupled with the transport of Na(+) ions from the cytoplasm to the periplasm. The first step is catalyzed by NqrF, which accepts electrons from NADH and reduces ubiquinone-1 to ubisemiquinone by a one-electron transfer pathway. This chain is Na(+)-translocating NADH-quinone reductase subunit F, found in Mannheimia succiniciproducens (strain KCTC 0769BP / MBEL55E).